A 169-amino-acid polypeptide reads, in one-letter code: Holo-[acyl-carrier-protein] synthase (169 aa).

Residues Asp-8 and Glu-50 each contribute to the Mg(2+) site.

Belongs to the P-Pant transferase superfamily. AcpS family. Mg(2+) is required as a cofactor.

The protein resides in the cytoplasm. It catalyses the reaction apo-[ACP] + CoA = holo-[ACP] + adenosine 3',5'-bisphosphate + H(+). Transfers the 4'-phosphopantetheine moiety from coenzyme A to a Ser of acyl-carrier-protein. The polypeptide is Holo-[acyl-carrier-protein] synthase (Thermotoga maritima (strain ATCC 43589 / DSM 3109 / JCM 10099 / NBRC 100826 / MSB8)).